A 691-amino-acid polypeptide reads, in one-letter code: POU domain, class 6, transcription factor 2 (691 aa).

Over residues 25–36 the composition is skewed to basic and acidic residues; the sequence is MNAELRGEDKAA. 3 disordered regions span residues 25–93, 186–297, and 435–461; these read MNAE…PVGP, LQQQ…LQLV, and SQAS…SALS. A compositionally biased stretch (low complexity) spans 186–195; sequence LQQQQQQQQQ. Positions 196 to 210 are enriched in pro residues; sequence QPPPSTNQHPQPAPQ. Residues 211 to 220 are compositionally biased toward low complexity; sequence APSQSQQQPL. Residues 221–238 are compositionally biased toward pro residues; it reads QPTPPQQPPPASQQPPAP. Low complexity-rich tracts occupy residues 239–280 and 438–461; these read TSQL…SQSP and SMSQ…SALS. The POU-specific domain maps to 476 to 586; that stretch reads VDGVNLEEIR…VLERWMAEAE (111 aa). A DNA-binding region (homeobox) is located at residues 607 to 666; sequence KRKRRTSFTPQALEILNAHFEKNTHPSGQEMTEIAEKLNYDREVVRVWFCNKRQALKNTI.

This sequence belongs to the POU transcription factor family. Class-6 subfamily. As to expression, expressed only within the CNS, where its expression is restricted to the medical habenulla, to a dispersed population of neurons in the dorsal hypothalamus, and to subsets of ganglion and amacrine cells in the retina.

The protein resides in the nucleus. Its function is as follows. Probable transcription factor likely to be involved in early steps in the differentiation of amacrine and ganglion cells. Recognizes and binds to the DNA sequence 5'-ATGCAAAT-3'. Isoform 1 does not bind DNA. The sequence is that of POU domain, class 6, transcription factor 2 (POU6F2) from Homo sapiens (Human).